Consider the following 218-residue polypeptide: Large ribosomal subunit protein uL3c (218 aa).

The segment at 127 to 161 is disordered; it reads GFSRGPMTHGSKNHREPGSTGAGTTPGRIYPGKRM.

This sequence belongs to the universal ribosomal protein uL3 family. As to quaternary structure, part of the 50S ribosomal subunit.

The protein resides in the plastid. It is found in the organellar chromatophore. In terms of biological role, one of the primary rRNA binding proteins, it binds directly near the 3'-end of the 23S rRNA, where it nucleates assembly of the 50S subunit. This is Large ribosomal subunit protein uL3c (rpl3) from Paulinella chromatophora.